Reading from the N-terminus, the 132-residue chain is Large-conductance mechanosensitive channel (132 aa).

Helical transmembrane passes span 14 to 34 (VIDL…VSSL), 38 to 58 (IITP…LKIT), and 69 to 89 (FIQT…FVKV).

This sequence belongs to the MscL family. In terms of assembly, homopentamer.

Its subcellular location is the cell membrane. Its function is as follows. Channel that opens in response to stretch forces in the membrane lipid bilayer. May participate in the regulation of osmotic pressure changes within the cell. The polypeptide is Large-conductance mechanosensitive channel (Bacillus thuringiensis (strain Al Hakam)).